Consider the following 1411-residue polypeptide: Protein three rows (1411 aa).

Residues 1065–1071 (VEPIRKQ) are separase cleavage-site. 3 disordered regions span residues 1221 to 1240 (LEPPSKPQNPRRALTFNISP), 1268 to 1301 (VRPASSTTSSSSSSSSSENASSPERKSTKSKSPK), and 1330 to 1411 (AKST…RHRN). Composition is skewed to low complexity over residues 1270–1289 (PASSTTSSSSSSSSSENASS) and 1386–1398 (TAEQPTTTTTATP).

Interacts with pim and Sse. Cleavage of thr contributes to inactivation of Sse.

The protein localises to the cytoplasm. Functionally, required specifically for chromosome disjunction during all mitoses; maternally provided protein is sufficient until mitosis 14 then zygotic protein is required. Involved in formation and/or maintenance of epithelial structures: bud extension during Malpighian tubule development, and foregut and hindgut morphogenesis. This is Protein three rows (thr) from Drosophila virilis (Fruit fly).